A 474-amino-acid polypeptide reads, in one-letter code: Trehalose-6-phosphate synthase (474 aa).

D-glucose 6-phosphate is bound at residue arginine 10. Residue 22-23 coordinates UDP-alpha-D-glucose; that stretch reads GG. Positions 77 and 131 each coordinate D-glucose 6-phosphate. Residues arginine 263 and lysine 268 each contribute to the UDP-alpha-D-glucose site. Arginine 301 contacts D-glucose 6-phosphate. UDP-alpha-D-glucose is bound by residues phenylalanine 340 and 366–370; that span reads LVAKE.

The protein belongs to the glycosyltransferase 20 family. Homotetramer.

The catalysed reaction is D-glucose 6-phosphate + UDP-alpha-D-glucose = alpha,alpha-trehalose 6-phosphate + UDP + H(+). The protein operates within glycan biosynthesis; trehalose biosynthesis. Probably involved in the osmoprotection via the biosynthesis of trehalose. Catalyzes the transfer of glucose from UDP-alpha-D-glucose (UDP-Glc) to D-glucose 6-phosphate (Glc-6-P) to form trehalose-6-phosphate. Acts with retention of the anomeric configuration of the UDP-sugar donor. The polypeptide is Trehalose-6-phosphate synthase (Escherichia coli O6:K15:H31 (strain 536 / UPEC)).